The following is a 623-amino-acid chain: Kelch repeat and BTB domain-containing protein 12 (623 aa).

One can recognise a BTB domain in the interval 31-98 (IDVVLTAEGE…MYNAALEINN (68 aa)). Residues 133-235 (CLGIYYFAKQ…NPSFLRQALR (103 aa)) form the BACK domain. Kelch repeat units lie at residues 386–436 (DLYV…TVNN), 437–492 (KLYV…VVNS), 494–547 (IYVL…STNA), and 553–603 (KLYV…LVAR).

This is Kelch repeat and BTB domain-containing protein 12 (KBTBD12) from Homo sapiens (Human).